A 47-amino-acid chain; its full sequence is PhoP/PhoQ regulator MgrB (47 aa).

A helical membrane pass occupies residues 6–26 (WAILLAVLVACLLLWMQTLNV).

This sequence belongs to the MgrB family. As to quaternary structure, may form homooligomers. Probably interacts with the periplasmic domain of PhoQ.

The protein localises to the cell inner membrane. PhoP-regulated transcription is redox-sensitive, being activated when the periplasm becomes more reducing. MgrB acts between DsbA/DsbB and PhoP/PhoQ in this pathway. Represses PhoP/PhoQ signaling, possibly by binding to the periplasmic domain of PhoQ, altering its activity and that of downstream effector PhoP. The sequence is that of PhoP/PhoQ regulator MgrB from Cronobacter sakazakii (strain ATCC BAA-894) (Enterobacter sakazakii).